A 615-amino-acid chain; its full sequence is 1-deoxy-D-xylulose-5-phosphate synthase (615 aa).

Residues histidine 72 and 111–113 each bind thiamine diphosphate; that span reads GHS. Mg(2+) is bound at residue aspartate 142. Residues 143-144, asparagine 171, tyrosine 278, and glutamate 360 each bind thiamine diphosphate; that span reads GA. Position 171 (asparagine 171) interacts with Mg(2+).

Belongs to the transketolase family. DXPS subfamily. Homodimer. It depends on Mg(2+) as a cofactor. Thiamine diphosphate is required as a cofactor.

It carries out the reaction D-glyceraldehyde 3-phosphate + pyruvate + H(+) = 1-deoxy-D-xylulose 5-phosphate + CO2. Its pathway is metabolic intermediate biosynthesis; 1-deoxy-D-xylulose 5-phosphate biosynthesis; 1-deoxy-D-xylulose 5-phosphate from D-glyceraldehyde 3-phosphate and pyruvate: step 1/1. In terms of biological role, catalyzes the acyloin condensation reaction between C atoms 2 and 3 of pyruvate and glyceraldehyde 3-phosphate to yield 1-deoxy-D-xylulose-5-phosphate (DXP). The polypeptide is 1-deoxy-D-xylulose-5-phosphate synthase (Campylobacter jejuni subsp. jejuni serotype O:2 (strain ATCC 700819 / NCTC 11168)).